Here is a 254-residue protein sequence, read N- to C-terminus: Triosephosphate isomerase (254 aa).

10 to 12 (NWK) contacts substrate. Residue H99 is the Electrophile of the active site. E169 (proton acceptor) is an active-site residue. Substrate-binding positions include G175, S215, and 236–237 (GG).

It belongs to the triosephosphate isomerase family. Homodimer.

The protein localises to the cytoplasm. The catalysed reaction is D-glyceraldehyde 3-phosphate = dihydroxyacetone phosphate. It functions in the pathway carbohydrate biosynthesis; gluconeogenesis. Its pathway is carbohydrate degradation; glycolysis; D-glyceraldehyde 3-phosphate from glycerone phosphate: step 1/1. Its function is as follows. Involved in the gluconeogenesis. Catalyzes stereospecifically the conversion of dihydroxyacetone phosphate (DHAP) to D-glyceraldehyde-3-phosphate (G3P). The chain is Triosephosphate isomerase from Chlamydia felis (strain Fe/C-56) (Chlamydophila felis).